A 467-amino-acid polypeptide reads, in one-letter code: MNKGRILSQLPSVDELIKNLEHDKLEKMIPRSVVVEQTRITVDTYRKAILTMDEGSLRDYQIDITSMHDEIKQACESFCSMNLREVINGTGVILHTNLGRSLLSEEIKGQIWEVASGYSTLEIDVTTGKRGSRYNHVVDVLKHLTGAEDALVVNNNAAAVMLVLGTIAKGKEVIVSRGELVEIGGSFRVPDVMEQSGGKLREVGTTNKTHLWDYEGAISDETAALLKVHTSNYRIMGFTESVGLEEIVELGNRYHIPTIEDIGSGVLIDLQKYGLAHEPTVQESVKAGVDIVTFSGDKLLGGPQAGIIVGKRKWIEKMKKNPLTRAIRVDKLTMAALEATLKLYLDEDTAIKHIPTLKMLTENLDTISERASDLFRKLQALDEHLLVRIEEDFSQVGGGSMPLEKLPTKVITLEHTILSAAQMETKLRNFKRPIFTRIRDEKVMMDLRTIREKDFVFIVEALKTVAK.

The residue at position 298 (K298) is an N6-(pyridoxal phosphate)lysine.

Belongs to the SelA family. The cofactor is pyridoxal 5'-phosphate.

Its subcellular location is the cytoplasm. The enzyme catalyses L-seryl-tRNA(Sec) + selenophosphate + H(+) = L-selenocysteinyl-tRNA(Sec) + phosphate. It participates in aminoacyl-tRNA biosynthesis; selenocysteinyl-tRNA(Sec) biosynthesis; selenocysteinyl-tRNA(Sec) from L-seryl-tRNA(Sec) (bacterial route): step 1/1. Functionally, converts seryl-tRNA(Sec) to selenocysteinyl-tRNA(Sec) required for selenoprotein biosynthesis. The protein is L-seryl-tRNA(Sec) selenium transferase of Alkaliphilus metalliredigens (strain QYMF).